The following is a 156-amino-acid chain: Proline dehydrogenase transcriptional activator (156 aa).

One can recognise an HTH asnC-type domain in the interval 10–71 (LDHFDLKILE…VLNPQKLGVD (62 aa)). Residues 29–48 (VLQLSKRVGLSKTPCQTRLK) constitute a DNA-binding region (H-T-H motif).

Functionally, transcriptional activator of the putA gene in response to proline. This Rhizobium radiobacter (Agrobacterium tumefaciens) protein is Proline dehydrogenase transcriptional activator (putR).